A 487-amino-acid polypeptide reads, in one-letter code: N-succinylglutamate 5-semialdehyde dehydrogenase (487 aa).

221–226 (GSSDTG) is a binding site for NAD(+). Residues glutamate 244 and cysteine 278 contribute to the active site.

The protein belongs to the aldehyde dehydrogenase family. AstD subfamily.

It catalyses the reaction N-succinyl-L-glutamate 5-semialdehyde + NAD(+) + H2O = N-succinyl-L-glutamate + NADH + 2 H(+). Its pathway is amino-acid degradation; L-arginine degradation via AST pathway; L-glutamate and succinate from L-arginine: step 4/5. Functionally, catalyzes the NAD-dependent reduction of succinylglutamate semialdehyde into succinylglutamate. This chain is N-succinylglutamate 5-semialdehyde dehydrogenase, found in Burkholderia cenocepacia (strain ATCC BAA-245 / DSM 16553 / LMG 16656 / NCTC 13227 / J2315 / CF5610) (Burkholderia cepacia (strain J2315)).